A 702-amino-acid polypeptide reads, in one-letter code: Elongation factor G (702 aa).

One can recognise a tr-type G domain in the interval 8 to 286 (DKVRNIGIIA…AVVEYLPSPL (279 aa)). GTP contacts are provided by residues 17-24 (AHIDAGKT), 85-89 (DTPGH), and 139-142 (NKMD).

This sequence belongs to the TRAFAC class translation factor GTPase superfamily. Classic translation factor GTPase family. EF-G/EF-2 subfamily.

The protein resides in the cytoplasm. In terms of biological role, catalyzes the GTP-dependent ribosomal translocation step during translation elongation. During this step, the ribosome changes from the pre-translocational (PRE) to the post-translocational (POST) state as the newly formed A-site-bound peptidyl-tRNA and P-site-bound deacylated tRNA move to the P and E sites, respectively. Catalyzes the coordinated movement of the two tRNA molecules, the mRNA and conformational changes in the ribosome. The polypeptide is Elongation factor G (Chloroflexus aggregans (strain MD-66 / DSM 9485)).